Here is a 248-residue protein sequence, read N- to C-terminus: MSRSYDSRTTIFSPEGRLYQVEYALEAINHAGVALGIVAKDGIVLAAEKKVTSKLLEQEESAEKLYHIGDNMLCAVAGLTADANILINYARRVGQQYLQTFNEEMPCEQLVRRVCDLKQGYTQYGGLRPFGVSFLYAGWDHIRGYQLFQSNPSGNYGSWQANSIGGNSTSVQSLMRQEYKDDINLDEASAMAVKFLSKTLDSNSLTHEKIEFATITKDTTKNKMVCKIWKSDEINEVLNKYQETQRQS.

The protein belongs to the peptidase T1A family. As to quaternary structure, the 26S proteasome consists of a 20S proteasome core and two 19S regulatory subunits. The 20S proteasome core is composed of 28 subunits that are arranged in four stacked rings, resulting in a barrel-shaped structure. The two end rings are each formed by seven alpha subunits, and the two central rings are each formed by seven beta subunits. The catalytic chamber with the active sites is on the inside of the barrel.

The protein localises to the cytoplasm. Its subcellular location is the nucleus. Its function is as follows. The proteasome is a multicatalytic proteinase complex which is characterized by its ability to cleave peptides with Arg, Phe, Tyr, Leu, and Glu adjacent to the leaving group at neutral or slightly basic pH. The proteasome has an ATP-dependent proteolytic activity. This is Probable proteasome subunit alpha type-3 from Schizosaccharomyces pombe (strain 972 / ATCC 24843) (Fission yeast).